Here is a 142-residue protein sequence, read N- to C-terminus: Putative pre-16S rRNA nuclease (142 aa).

The protein belongs to the YqgF nuclease family.

It localises to the cytoplasm. Could be a nuclease involved in processing of the 5'-end of pre-16S rRNA. This is Putative pre-16S rRNA nuclease from Photobacterium profundum (strain SS9).